The primary structure comprises 411 residues: Indian hedgehog protein (411 aa).

Positions 1–27 (MSPARLRPRLHFCLVLLLLLVVPAAWG) are cleaved as a signal peptide. A lipid anchor (N-palmitoyl cysteine) is attached at C28. 7 residues coordinate Ca(2+): E94, E95, D100, T130, E131, D134, and D136. The Zn(2+) site is built by H145, D152, and H187. G202 is lipidated: Cholesterol glycine ester. A glycan (N-linked (GlcNAc...) asparagine) is linked at N282.

This sequence belongs to the hedgehog family. Multimer. In terms of assembly, interacts with BOC and CDON. Interacts with PTCH1. Interacts with glypican GPC3. Cholesterylation is required for N-product targeting to lipid rafts and multimerization. Post-translationally, the C-terminal domain displays an autoproteolysis activity and a cholesterol transferase activity. Both activities result in the cleavage of the full-length protein and covalent attachment of a cholesterol moiety to the C-terminal of the newly generated N-product. The N-product is the active species in both local and long-range signaling, whereas the C-product is degraded in the endoplasmic reticulum. In terms of processing, N-palmitoylation by HHAT of N-product is required for indian hedgehog protein N-product multimerization and full activity. Expressed in embryonic lung, and in adult kidney and liver.

It localises to the cell membrane. The protein resides in the endoplasmic reticulum membrane. It is found in the golgi apparatus membrane. Its subcellular location is the secreted. It catalyses the reaction glycyl-L-cysteinyl-[protein] + cholesterol + H(+) = [protein]-C-terminal glycyl cholesterol ester + N-terminal L-cysteinyl-[protein]. Functionally, plays a role in embryonic morphogenesis; it is involved in the regulation of endochondral skeleton formation, and the development of retinal pigment epithelium (RPE), photoreceptors and periocular tissues. The C-terminal part of the indian hedgehog protein precursor displays an autoproteolysis and a cholesterol transferase activity. Both activities result in the cleavage of the full-length protein into two parts followed by the covalent attachment of a cholesterol moiety to the C-terminal of the newly generated N-product. Both activities occur in the endoplasmic reticulum. Plays a role in hedgehog paracrine signaling. Associated with the very-low-density lipoprotein (VLDL) particles to function as a circulating morphogen for endothelial cell integrity maintenance. Its function is as follows. The dually lipidated indian hedgehog protein N-product is a morphogen which is essential for a variety of patterning events during development. Binds to the patched (PTCH1) receptor, which functions in association with smoothened (SMO), to activate the transcription of target genes. Plays a role in morphogenesis of the skeleton by coordinating growth and differentiation of the endochondral skeleton. Positively regulates PTHLH expression during endochondral bone formation preventing chondrocyte hypertrophy. In contrast, participates in normal chondrocyte proliferation in a PTHLH-independent pathway. This chain is Indian hedgehog protein, found in Homo sapiens (Human).